Consider the following 127-residue polypeptide: UPF0325 protein VC_2264 (127 aa).

This sequence belongs to the UPF0325 family.

The polypeptide is UPF0325 protein VC_2264 (Vibrio cholerae serotype O1 (strain ATCC 39315 / El Tor Inaba N16961)).